A 393-amino-acid chain; its full sequence is NAD(P)H-quinone oxidoreductase subunit H, chloroplastic (393 aa).

Belongs to the complex I 49 kDa subunit family. As to quaternary structure, NDH is composed of at least 16 different subunits, 5 of which are encoded in the nucleus.

The protein localises to the plastid. It is found in the chloroplast thylakoid membrane. The catalysed reaction is a plastoquinone + NADH + (n+1) H(+)(in) = a plastoquinol + NAD(+) + n H(+)(out). It carries out the reaction a plastoquinone + NADPH + (n+1) H(+)(in) = a plastoquinol + NADP(+) + n H(+)(out). In terms of biological role, NDH shuttles electrons from NAD(P)H:plastoquinone, via FMN and iron-sulfur (Fe-S) centers, to quinones in the photosynthetic chain and possibly in a chloroplast respiratory chain. The immediate electron acceptor for the enzyme in this species is believed to be plastoquinone. Couples the redox reaction to proton translocation, and thus conserves the redox energy in a proton gradient. This is NAD(P)H-quinone oxidoreductase subunit H, chloroplastic from Piper cenocladum (Ant piper).